A 576-amino-acid chain; its full sequence is MTPVTTKTIRPEVPPETEKLSLLHGPIDPPLVDLTLGELLELQTYQHGTHECLVIPWTGARWTYNDLNQQSSWLAHALLDLGIGVGDRVGIMAGNCEQYAAVFFAAAKIGAILVILNNTYTPTEAMYGIQFSECKVVFTTRKIGRMDNTRLLGDLDNLDRGPKVVMLRGESANYATYDDLIESAMGKSHEKLYEAMRRVSPHQVVNLQFTSGTTGLPKAAMLTHHNLVNNSRFIGDRMRLTSADVLCCPPPLFHCFGLVLGLLAIVTHGGKIVYPAEVFDIAATLRAISDENCTAVHGVPAMFDSLFQAEFPANFRCDRLRTGIIAGAPVPRYLMELLVEKFGMTEFTSSYGLTEASPTCFNAFTDDSIDTRLTTVGTLMPHAHAKIVDRDGNIVPVGVRGELCIGGYQLQAGYWNNSAKTAEVMVRDATGVLWLHTGDEAVFDEHGYCSITGRFKDIIIRGGENIYPLEIEERLLAHPAISRAIVVGLKSNHYGEVVGAFLERAPTAAKKPSDQELRDWVRKRLGGHKSPAHLFWLGEGGVPADVPLTGSGKVKKFEMAKLGDELLRKETPVAKL.

A PTS2-type peroxisomal targeting signal motif is present at residues 3–11; that stretch reads PVTTKTIRP. ATP-binding residues include Asp-439, Arg-454, and Lys-553.

This sequence belongs to the ATP-dependent AMP-binding enzyme family.

Its subcellular location is the peroxisome. It functions in the pathway siderophore biosynthesis. Acyl-CoA ligase; part of the gene cluster that mediates the biosynthesis of at least 11 siderophores, including beauverichelin A, dimerumic acid (DA), Na-dimethyl coprogen (NADC), eleutherazine B, ferricrocin (FC), fusarinine A, fusarinine C (FsC), metachelin A, mevalonolactone, rhodotorulic acid (RA) and tenellin. This cocktail of siderophores for iron metabolism is essential for virulence, and more specifically for the fungal virulence in penetrating through the host cuticle. Siderophore synthesis is also involved in conidial germination under iron-deficient conditions. For biosynthesis of fusarinine C, the transacylase SIDF transfers anhydromevalonyl to N(5)-hydroxyornithine. The required anhydromevalonyl-CoA moiety is derived from mevalonate by CoA ligation and dehydration catalyzed by SIDI and sidH respectively. This chain is Acyl-CoA ligase sidI, found in Beauveria bassiana (strain ARSEF 2860) (White muscardine disease fungus).